Consider the following 322-residue polypeptide: MPNITWCDLPEDVSLWPGLPLSLSGDEVMPLDYHAGRSGWLLYGRGLDKQRLTQYQSKLGAAMVIVAAWCVEDYQVIRLAGSLTARATRLAHEAQLDVAPLGKIPHLRTPGLLVMDMDSTAIQIECIDEIAKLAGTGEMVAEVTERAMRGELDFTASLRSRVATLKGADANILQQVRENLPLMPGLTQLVLKLETLGWKVAIASGGFTFFAEYLRDKLRLTAVVANELEIMDGKFTGNVIGDIVDAQYKAKTLTRLAQEYEIPLAQTVAIGDGANDLPMIKAAGLGIAYHAKPKVNEKAEVTIRHADLMGVFCILSGSLNQK.

10–12 (PED) lines the substrate pocket. Residues aspartate 12, aspartate 116, and aspartate 118 each contribute to the Mg(2+) site. Aspartate 116 serves as the catalytic Nucleophile. The active-site Proton donor is the aspartate 118. Substrate contacts are provided by residues glutamate 125, arginine 161, 204-205 (SG), and lysine 249. Aspartate 272 is a binding site for Mg(2+). Asparagine 275 contributes to the substrate binding site.

Belongs to the HAD-like hydrolase superfamily. SerB family. Mg(2+) serves as cofactor.

It catalyses the reaction O-phospho-L-serine + H2O = L-serine + phosphate. The catalysed reaction is O-phospho-D-serine + H2O = D-serine + phosphate. Its pathway is amino-acid biosynthesis; L-serine biosynthesis; L-serine from 3-phospho-D-glycerate: step 3/3. In terms of biological role, catalyzes the dephosphorylation of phosphoserine (P-Ser). The protein is Phosphoserine phosphatase (serB) of Escherichia coli O157:H7.